The following is a 130-amino-acid chain: Large ribosomal subunit protein bL19 (130 aa).

Belongs to the bacterial ribosomal protein bL19 family.

In terms of biological role, this protein is located at the 30S-50S ribosomal subunit interface and may play a role in the structure and function of the aminoacyl-tRNA binding site. In Cupriavidus metallidurans (strain ATCC 43123 / DSM 2839 / NBRC 102507 / CH34) (Ralstonia metallidurans), this protein is Large ribosomal subunit protein bL19.